The following is a 140-amino-acid chain: Large ribosomal subunit protein uL11 (140 aa).

Belongs to the universal ribosomal protein uL11 family. As to quaternary structure, part of the ribosomal stalk of the 50S ribosomal subunit. Interacts with L10 and the large rRNA to form the base of the stalk. L10 forms an elongated spine to which L12 dimers bind in a sequential fashion forming a multimeric L10(L12)X complex. In terms of processing, one or more lysine residues are methylated.

In terms of biological role, forms part of the ribosomal stalk which helps the ribosome interact with GTP-bound translation factors. This Desulfatibacillum aliphaticivorans protein is Large ribosomal subunit protein uL11.